A 378-amino-acid chain; its full sequence is T-cell immunoglobulin and mucin domain-containing protein 4 (378 aa).

A signal peptide spans 1–24 (MSKEPLILWLMIEFWWLYLTPVTS). The Ig-like V-type domain occupies 25 to 126 (ETVVTEVLGH…PGWFNDVKIN (102 aa)). At 25–314 (ETVVTEVLGH…SMKNEMPISQ (290 aa)) the chain is on the extracellular side. 3 cysteine pairs are disulfide-bonded: cysteine 40/cysteine 112, cysteine 53/cysteine 64, and cysteine 59/cysteine 111. Disordered regions lie at residues 136–160 (TTTH…TRQM) and 269–304 (WKTS…GIPM). A compositionally biased stretch (polar residues) spans 269-297 (WKTSDSVSSPQPGASDTAVPEQNKTTKTG). N-linked (GlcNAc...) asparagine glycosylation occurs at asparagine 291. The helical transmembrane segment at 315 to 335 (LLMIIAPSLGFVLFALFVAFL) threads the bilayer. Over 336–378 (LRGKLMETYCSQKHTRLDYIGDSKNVLNDVQHGREDEDGLFTL) the chain is Cytoplasmic. Serine 358 is modified (phosphoserine).

It belongs to the immunoglobulin superfamily. TIM family. As to quaternary structure, interacts with MERTK; this interaction enhances TIMD4-mediated efferocytosis. Interacts with EPHA2.

The protein localises to the cell membrane. The protein resides in the secreted. It localises to the extracellular exosome. Functionally, phosphatidylserine receptor that plays different role in immune response including phagocytosis of apoptotic cells and T-cell regulation. Controls T-cell activation in a bimodal fashion, decreasing the activation of naive T-cells by inducing cell cycle arrest, while increasing proliferation of activated T-cells by activating AKT1 and ERK1/2 phosphorylations and subsequent signaling pathways. Also plays a role in efferocytosis which is the process by which apoptotic cells are removed by phagocytic cells. Mechanistically, promotes the engulfment of apoptotic cells or exogenous particles by securing them to phagocytes through direct binding to phosphatidylserine present on apoptotic cells, while other engulfment receptors such as MERTK efficiently recognize apoptotic cells and mediate their ingestion. Additionally, promotes autophagy process by suppressing NLRP3 inflammasome activity via activation of LKB1/PRKAA1 pathway in a phosphatidylserine-dependent mechanism. Its function is as follows. (Microbial infection) Plays a positive role in exosome-mediated trafficking of HIV-1 virus and its entry into immune cells. The chain is T-cell immunoglobulin and mucin domain-containing protein 4 (TIMD4) from Homo sapiens (Human).